We begin with the raw amino-acid sequence, 427 residues long: MSAIIDVIAREILDSRGNPTVEADVLLESGVIGRAAVPSGASTGSREAIELRDGDKSRYLGKGVLKAVEHVNTEICEAIIGLDVEDQAFIDQTMIELDGTENKSRLGANALLAVSMACARAAAEQAGLPLYRYLGGAAPMQLPVPMMNIINGGAHANNNIDMQEFMVIPVGAPSFREALRYGAEVFHALKKLLDDAGMTTTVGDEGGFAPNLESHEAALKLIVQAIEKAGLQPGIDVAIGVDCASSEFYKDGLYHIDSENLKLTSAAFTDYLAAWCDKYPIISIEDGMAEGDWDGWKILTDRLGRRVQLVGDDLFVTNAKILKEGIEKDIANSILIKVNQIGTLSETFQAIEMAKQAGYTSVISHRSGETEDTTIADLAVATNARQIKTGSLSRSDRMAKYNQLLRIEEELGDTASYPGRDAFRQRG.

Residue Gln163 coordinates (2R)-2-phosphoglycerate. Residue Glu205 is the Proton donor of the active site. Residues Asp242, Glu285, and Asp312 each coordinate Mg(2+). (2R)-2-phosphoglycerate contacts are provided by Lys337, Arg366, Ser367, and Lys388. Residue Lys337 is the Proton acceptor of the active site.

The protein belongs to the enolase family. It depends on Mg(2+) as a cofactor.

Its subcellular location is the cytoplasm. It localises to the secreted. It is found in the cell surface. The enzyme catalyses (2R)-2-phosphoglycerate = phosphoenolpyruvate + H2O. Its pathway is carbohydrate degradation; glycolysis; pyruvate from D-glyceraldehyde 3-phosphate: step 4/5. Its function is as follows. Catalyzes the reversible conversion of 2-phosphoglycerate (2-PG) into phosphoenolpyruvate (PEP). It is essential for the degradation of carbohydrates via glycolysis. This Thiobacillus denitrificans (strain ATCC 25259 / T1) protein is Enolase.